We begin with the raw amino-acid sequence, 410 residues long: Arginine biosynthesis bifunctional protein ArgJ (410 aa).

Substrate-binding residues include threonine 158, lysine 184, threonine 195, glutamate 282, asparagine 405, and threonine 410. The active-site Nucleophile is the threonine 195.

Belongs to the ArgJ family. As to quaternary structure, heterotetramer of two alpha and two beta chains.

The protein localises to the cytoplasm. The catalysed reaction is N(2)-acetyl-L-ornithine + L-glutamate = N-acetyl-L-glutamate + L-ornithine. It carries out the reaction L-glutamate + acetyl-CoA = N-acetyl-L-glutamate + CoA + H(+). It participates in amino-acid biosynthesis; L-arginine biosynthesis; L-ornithine and N-acetyl-L-glutamate from L-glutamate and N(2)-acetyl-L-ornithine (cyclic): step 1/1. Its pathway is amino-acid biosynthesis; L-arginine biosynthesis; N(2)-acetyl-L-ornithine from L-glutamate: step 1/4. Functionally, catalyzes two activities which are involved in the cyclic version of arginine biosynthesis: the synthesis of N-acetylglutamate from glutamate and acetyl-CoA as the acetyl donor, and of ornithine by transacetylation between N(2)-acetylornithine and glutamate. This is Arginine biosynthesis bifunctional protein ArgJ from Rhodopirellula baltica (strain DSM 10527 / NCIMB 13988 / SH1).